A 242-amino-acid polypeptide reads, in one-letter code: Phosphoribosylaminoimidazole-succinocarboxamide synthase (242 aa).

This sequence belongs to the SAICAR synthetase family.

It carries out the reaction 5-amino-1-(5-phospho-D-ribosyl)imidazole-4-carboxylate + L-aspartate + ATP = (2S)-2-[5-amino-1-(5-phospho-beta-D-ribosyl)imidazole-4-carboxamido]succinate + ADP + phosphate + 2 H(+). The protein operates within purine metabolism; IMP biosynthesis via de novo pathway; 5-amino-1-(5-phospho-D-ribosyl)imidazole-4-carboxamide from 5-amino-1-(5-phospho-D-ribosyl)imidazole-4-carboxylate: step 1/2. This is Phosphoribosylaminoimidazole-succinocarboxamide synthase (purC) from Methanocaldococcus jannaschii (strain ATCC 43067 / DSM 2661 / JAL-1 / JCM 10045 / NBRC 100440) (Methanococcus jannaschii).